Reading from the N-terminus, the 416-residue chain is Dihydroorotase (416 aa).

Zn(2+) contacts are provided by H53 and H55. Substrate-binding positions include 55–57 (HLR) and N87. Zn(2+) is bound by residues D145, H172, H225, and D298. Residue D298 is part of the active site. H302 provides a ligand contact to substrate.

Belongs to the metallo-dependent hydrolases superfamily. DHOase family. Class I DHOase subfamily. Zn(2+) is required as a cofactor.

It carries out the reaction (S)-dihydroorotate + H2O = N-carbamoyl-L-aspartate + H(+). It functions in the pathway pyrimidine metabolism; UMP biosynthesis via de novo pathway; (S)-dihydroorotate from bicarbonate: step 3/3. In terms of biological role, catalyzes the reversible cyclization of carbamoyl aspartate to dihydroorotate. This chain is Dihydroorotase, found in Deinococcus radiodurans (strain ATCC 13939 / DSM 20539 / JCM 16871 / CCUG 27074 / LMG 4051 / NBRC 15346 / NCIMB 9279 / VKM B-1422 / R1).